Here is a 336-residue protein sequence, read N- to C-terminus: 3-hydroxyisobutyrate dehydrogenase, mitochondrial (336 aa).

Residues Met1–Val36 constitute a mitochondrion transit peptide. Thr40 to Tyr68 lines the NAD(+) pocket. N6-acetyllysine; alternate occurs at positions 60 and 76. N6-succinyllysine; alternate occurs at positions 60 and 76. The residue at position 95 (Lys95) is an N6-succinyllysine. NAD(+)-binding positions include Leu103–Pro104 and Asn108. Lys121 bears the N6-acetyllysine mark. Thr134 provides a ligand contact to NAD(+). The residue at position 141 (Lys141) is an N6-succinyllysine. The residue at position 145 (Lys145) is an N6-acetyllysine. Lys149 carries the N6-acetyllysine; alternate modification. N6-succinyllysine; alternate is present on Lys149. The active site involves Lys209. Residues Lys238 and Lys242 each carry the N6-acetyllysine; alternate modification. N6-succinyllysine; alternate occurs at positions 238 and 242. An NAD(+)-binding site is contributed by Lys284. The residue at position 297 (Lys297) is an N6-succinyllysine. Lys321 bears the N6-acetyllysine; alternate mark. Residue Lys321 is modified to N6-succinyllysine; alternate.

Belongs to the HIBADH-related family. 3-hydroxyisobutyrate dehydrogenase subfamily. Homodimer. In terms of tissue distribution, detected in skin fibroblasts.

The protein resides in the mitochondrion. The enzyme catalyses 3-hydroxy-2-methylpropanoate + NAD(+) = 2-methyl-3-oxopropanoate + NADH + H(+). The protein operates within amino-acid degradation; L-valine degradation. This is 3-hydroxyisobutyrate dehydrogenase, mitochondrial (HIBADH) from Homo sapiens (Human).